The chain runs to 144 residues: 3-hydroxyacyl-[acyl-carrier-protein] dehydratase FabZ (144 aa).

Residue His-51 is part of the active site.

The protein belongs to the thioester dehydratase family. FabZ subfamily.

It is found in the cytoplasm. The catalysed reaction is a (3R)-hydroxyacyl-[ACP] = a (2E)-enoyl-[ACP] + H2O. Functionally, involved in unsaturated fatty acids biosynthesis. Catalyzes the dehydration of short chain beta-hydroxyacyl-ACPs and long chain saturated and unsaturated beta-hydroxyacyl-ACPs. This Clostridium botulinum (strain ATCC 19397 / Type A) protein is 3-hydroxyacyl-[acyl-carrier-protein] dehydratase FabZ.